A 164-amino-acid chain; its full sequence is ATP synthase subunit b 2 (164 aa).

A helical membrane pass occupies residues 4–24 (TFWAFVGLVLFLALLAYFKVP).

This sequence belongs to the ATPase B chain family. As to quaternary structure, F-type ATPases have 2 components, F(1) - the catalytic core - and F(0) - the membrane proton channel. F(1) has five subunits: alpha(3), beta(3), gamma(1), delta(1), epsilon(1). F(0) has three main subunits: a(1), b(2) and c(10-14). The alpha and beta chains form an alternating ring which encloses part of the gamma chain. F(1) is attached to F(0) by a central stalk formed by the gamma and epsilon chains, while a peripheral stalk is formed by the delta and b chains.

It is found in the cell inner membrane. F(1)F(0) ATP synthase produces ATP from ADP in the presence of a proton or sodium gradient. F-type ATPases consist of two structural domains, F(1) containing the extramembraneous catalytic core and F(0) containing the membrane proton channel, linked together by a central stalk and a peripheral stalk. During catalysis, ATP synthesis in the catalytic domain of F(1) is coupled via a rotary mechanism of the central stalk subunits to proton translocation. In terms of biological role, component of the F(0) channel, it forms part of the peripheral stalk, linking F(1) to F(0). The chain is ATP synthase subunit b 2 from Bartonella quintana (strain Toulouse) (Rochalimaea quintana).